The chain runs to 435 residues: Amino acid transporter AVT6C (435 aa).

Residues 1 to 24 (MTPQIKTHLLPKQEPSSSENHGSS) form a disordered region. 11 consecutive transmembrane segments (helical) span residues 28–48 (IVFN…PAAF), 53–73 (IVPA…SVGF), 100–120 (IAVQ…FSII), 148–168 (WNTR…PLVL), 181–201 (VSFL…ISAL), 219–239 (GSFW…TFHF), 260–280 (ISVI…YLLF), 307–327 (IVRL…NFSL), 354–374 (LALL…WYFF), 375–395 (QFMG…AIVL), and 408–428 (IVAA…ISTN).

It belongs to the amino acid/polyamine transporter 2 family. Amino acid/auxin permease (AAAP) (TC 2.A.18.6) subfamily.

It is found in the membrane. This is Amino acid transporter AVT6C from Arabidopsis thaliana (Mouse-ear cress).